The primary structure comprises 332 residues: Glycerol-3-phosphate dehydrogenase [NAD(P)+] (332 aa).

Residues Ser-10, Trp-11, Lys-31, and Lys-105 each contribute to the NADPH site. Sn-glycerol 3-phosphate is bound by residues Lys-105, Gly-136, and Ser-138. Ala-140 is a binding site for NADPH. Sn-glycerol 3-phosphate is bound by residues Lys-191, Asp-244, Ser-254, Arg-255, and Asn-256. Lys-191 acts as the Proton acceptor in catalysis. An NADPH-binding site is contributed by Arg-255. Residues Val-279 and Glu-281 each contribute to the NADPH site.

This sequence belongs to the NAD-dependent glycerol-3-phosphate dehydrogenase family.

It is found in the cytoplasm. The enzyme catalyses sn-glycerol 3-phosphate + NAD(+) = dihydroxyacetone phosphate + NADH + H(+). It carries out the reaction sn-glycerol 3-phosphate + NADP(+) = dihydroxyacetone phosphate + NADPH + H(+). It functions in the pathway membrane lipid metabolism; glycerophospholipid metabolism. Functionally, catalyzes the reduction of the glycolytic intermediate dihydroxyacetone phosphate (DHAP) to sn-glycerol 3-phosphate (G3P), the key precursor for phospholipid synthesis. This chain is Glycerol-3-phosphate dehydrogenase [NAD(P)+], found in Anaeromyxobacter dehalogenans (strain 2CP-C).